Here is a 173-residue protein sequence, read N- to C-terminus: Crossover junction endodeoxyribonuclease RuvC (173 aa).

Active-site residues include aspartate 8, glutamate 67, and aspartate 139. Aspartate 8, glutamate 67, and aspartate 139 together coordinate Mg(2+).

Belongs to the RuvC family. In terms of assembly, homodimer which binds Holliday junction (HJ) DNA. The HJ becomes 2-fold symmetrical on binding to RuvC with unstacked arms; it has a different conformation from HJ DNA in complex with RuvA. In the full resolvosome a probable DNA-RuvA(4)-RuvB(12)-RuvC(2) complex forms which resolves the HJ. Requires Mg(2+) as cofactor.

The protein resides in the cytoplasm. The enzyme catalyses Endonucleolytic cleavage at a junction such as a reciprocal single-stranded crossover between two homologous DNA duplexes (Holliday junction).. In terms of biological role, the RuvA-RuvB-RuvC complex processes Holliday junction (HJ) DNA during genetic recombination and DNA repair. Endonuclease that resolves HJ intermediates. Cleaves cruciform DNA by making single-stranded nicks across the HJ at symmetrical positions within the homologous arms, yielding a 5'-phosphate and a 3'-hydroxyl group; requires a central core of homology in the junction. The consensus cleavage sequence is 5'-(A/T)TT(C/G)-3'. Cleavage occurs on the 3'-side of the TT dinucleotide at the point of strand exchange. HJ branch migration catalyzed by RuvA-RuvB allows RuvC to scan DNA until it finds its consensus sequence, where it cleaves and resolves the cruciform DNA. This Serratia proteamaculans (strain 568) protein is Crossover junction endodeoxyribonuclease RuvC.